The primary structure comprises 423 residues: Glycine amidinotransferase, mitochondrial (423 aa).

A mitochondrion-targeting transit peptide spans 1–43; the sequence is MLRVRCLRGGSRGAEAVHYIGSRLGRTLTGWVQRTFQSTQAAT. A disordered region spans residues 43 to 63; it reads TASSRNSFAADDKATEPLPKD. 2 positions are modified to phosphoserine: Ser-46 and Ser-49. Residues 52–61 show a composition bias toward basic and acidic residues; it reads ADDKATEPLP. Asp-170 provides a ligand contact to arginine. Catalysis depends on residues Asp-254 and His-303. Arginine is bound by residues Asp-305, Arg-322, Ser-354, and Ser-355. Lys-385 is subject to N6-acetyllysine. The Amidino-cysteine intermediate role is filled by Cys-407.

Belongs to the amidinotransferase family. Homodimer.

It is found in the mitochondrion inner membrane. It catalyses the reaction L-arginine + glycine = guanidinoacetate + L-ornithine. The enzyme catalyses 4-aminobutanoate + L-arginine = 4-guanidinobutanoate + L-ornithine. It carries out the reaction beta-alanine + L-arginine = 3-guanidinopropanoate + L-ornithine. The catalysed reaction is taurine + L-arginine = taurocyamine + L-ornithine. It participates in amine and polyamine biosynthesis; creatine biosynthesis; creatine from L-arginine and glycine: step 1/2. Functionally, transamidinase that catalyzes the transfer of the amidino group of L-arginine onto the amino moiety of acceptor metabolites such as glycine, beta-alanine, gamma-aminobutyric acid (GABA) and taurine yielding the corresponding guanidine derivatives. Catalyzes the rate-limiting step of creatine biosynthesis, namely the transfer of the amidino group from L-arginine to glycine to generate guanidinoacetate, which is then methylated by GAMT to form creatine. Provides creatine as a source for ATP generation in tissues with high energy demands, in particular skeletal muscle, heart and brain. The protein is Glycine amidinotransferase, mitochondrial (GATM) of Macaca fascicularis (Crab-eating macaque).